Here is a 2898-residue protein sequence, read N- to C-terminus: Papilin (2898 aa).

Positions 1 to 26 (MDLSRRLCSTALVAFIVLASIHDSQS) are cleaved as a signal peptide. The disordered stretch occupies residues 43–67 (LPESSVTPGGEGNDPDEWTPWSSPS). A TSP type-1 1 domain is found at 57–111 (PDEWTPWSSPSDCSRTCGGGVSYQTRECLRRDDRGEAVCSGGSRRYFSCNTQDCP). Intrachain disulfides connect cysteine 69–cysteine 105, cysteine 73–cysteine 110, and cysteine 84–cysteine 95. N-linked (GlcNAc...) asparagine glycans are attached at residues asparagine 258 and asparagine 319. Positions 338-397 (DTHTWTHHQFNACSASCGGGSQSRKVTCNNRITLAEVNPSLCDQKSKPVEEQACGTEPCA) constitute a TSP type-1 2 domain. N-linked (GlcNAc...) asparagine glycosylation is present at asparagine 419. 4 consecutive TSP type-1 domains span residues 461–521 (NCPK…TPCE), 522–575 (GVDW…KSPK), 576–633 (CEAQ…QDCE), and 639–694 (CPGE…EACT). Cystine bridges form between cysteine 462/cysteine 504, cysteine 473/cysteine 515, and cysteine 477/cysteine 520. A glycan (N-linked (GlcNAc...) asparagine) is linked at asparagine 669. Disordered stretches follow at residues 699 to 1252 (LPLT…CAKS) and 1323 to 1367 (GEND…PDTK). 2 stretches are compositionally biased toward acidic residues: residues 708 to 720 (IEDD…EDGI) and 727 to 738 (LSDDEKSEDVID). Positions 768–788 (STGTTFEGSGYDSESTTDSGI) are enriched in polar residues. Residues 801 to 879 (EASTDLSSST…ASASESTDVS (79 aa)) show a composition bias toward low complexity. Asparagine 889, asparagine 914, asparagine 917, asparagine 950, and asparagine 1064 each carry an N-linked (GlcNAc...) asparagine glycan. Residues 890–1053 (ASDSTPESST…SDNTDITTDG (164 aa)) show a composition bias toward low complexity. Over residues 1064-1073 (NASTEGSTEG) the composition is skewed to polar residues. Composition is skewed to low complexity over residues 1076 to 1091 (EDTT…TEST) and 1104 to 1215 (STVE…IWST). The segment covering 1237–1248 (SKPRKCKPKKST) has biased composition (basic residues). Residues 1330–1351 (PETTTVPPTTTTEETQPETTTE) show a composition bias toward low complexity. N-linked (GlcNAc...) asparagine glycosylation is found at asparagine 1489 and asparagine 1623. Intrachain disulfides connect cysteine 1612–cysteine 1662, cysteine 1621–cysteine 1645, cysteine 1637–cysteine 1658, cysteine 1671–cysteine 1721, cysteine 1680–cysteine 1704, cysteine 1696–cysteine 1717, cysteine 1730–cysteine 1780, cysteine 1739–cysteine 1763, cysteine 1755–cysteine 1776, cysteine 1790–cysteine 1840, cysteine 1799–cysteine 1823, cysteine 1815–cysteine 1836, cysteine 1849–cysteine 1899, cysteine 1858–cysteine 1882, and cysteine 1874–cysteine 1895. 5 BPTI/Kunitz inhibitor domains span residues 1612 to 1662 (CGLP…KDTC), 1671 to 1721 (CLLP…QGTC), 1730 to 1780 (CEQP…NYNC), 1790 to 1840 (CALP…EDHC), and 1849 to 1899 (CEIP…LARC). Residue asparagine 1750 is glycosylated (N-linked (GlcNAc...) asparagine). Residues 1902–1928 (KPEPTTTTPATRPQPSRQDVCDEEPAP) are disordered. Residues 1905–1916 (PTTTTPATRPQP) show a composition bias toward low complexity. 3 disulfides stabilise this stretch: cysteine 1922–cysteine 1972, cysteine 1931–cysteine 1955, and cysteine 1947–cysteine 1968. The BPTI/Kunitz inhibitor 6 domain maps to 1922–1972 (CDEEPAPGECSTWVLKWHFDRKIGACRQFYYGNCGGNGNRFETENDCQQRC). The tract at residues 1972 to 2004 (CLSQEPPAPTPPRAPAPTRQPDPAPTVAQCSQP) is disordered. The segment covering 1977 to 1995 (PPAPTPPRAPAPTRQPDPA) has biased composition (pro residues). Intrachain disulfides connect cysteine 2001-cysteine 2051, cysteine 2010-cysteine 2034, cysteine 2026-cysteine 2047, cysteine 2071-cysteine 2121, cysteine 2080-cysteine 2104, cysteine 2096-cysteine 2117, cysteine 2128-cysteine 2178, cysteine 2137-cysteine 2161, cysteine 2153-cysteine 2174, cysteine 2194-cysteine 2244, cysteine 2203-cysteine 2227, cysteine 2219-cysteine 2240, cysteine 2253-cysteine 2303, cysteine 2262-cysteine 2286, cysteine 2278-cysteine 2299, cysteine 2318-cysteine 2371, cysteine 2327-cysteine 2354, and cysteine 2346-cysteine 2367. BPTI/Kunitz inhibitor domains lie at 2001 to 2051 (CSQP…SARC), 2071 to 2121 (CFLA…QNEC), 2128 to 2178 (CALP…LNFC), 2194 to 2244 (CAEP…ERQC), 2253 to 2303 (CNEP…QTVC), and 2318 to 2371 (CLLP…TNQC). Asparagine 2020 carries N-linked (GlcNAc...) asparagine glycosylation. The N-linked (GlcNAc...) asparagine glycan is linked to asparagine 2083. N-linked (GlcNAc...) asparagine glycosylation occurs at asparagine 2205. The WAP domain maps to 2452-2498 (DIYKPGECPALSANASGCARECYTDADCRGDNKCCSDGCGQLCVHPA). Residues asparagine 2465, asparagine 2552, and asparagine 2625 are each glycosylated (N-linked (GlcNAc...) asparagine). 3 Ig-like C2-type domains span residues 2523–2607 (PKEA…REVA), 2617–2697 (PAYI…RPVS), and 2749–2840 (PTVN…ANVS). A disulfide bridge links cysteine 2543 with cysteine 2592. Disulfide bonds link cysteine 2640/cysteine 2687 and cysteine 2775/cysteine 2824. Asparagine 2784 and asparagine 2838 each carry an N-linked (GlcNAc...) asparagine glycan. A PLAC domain is found at 2847-2886 (VSPECVDNPYFANCKLIVKGRYCSNPYYTQFCCRSCTLAG).

Belongs to the papilin family. Homooligomer; disulfide-linked. In terms of processing, N-glycosylated. Sulfated. In terms of tissue distribution, during embryogenesis it first appears in the extracellular matrix during gastrulation and early mesoderm development at sites where basement membranes do not subsequently form. Later, migrating hemocytes prominently produce it together with other ECM components, in basement membranes that underlie epithelia and envelop muscles and emerging organs. At various life stages, it can be synthesized by other cells, such as those of the fat body, and it also occurs in a few, circumscribed regions of relatively amorphous ECM. Isoform E is specifically expressed in ECM of heart and proventriculus. Isoform C is a major component of transitory ECM deposit in the early embryo. Isoform F is a major component of the basement membrane during embryogenesis.

Its subcellular location is the secreted. It localises to the extracellular space. The protein localises to the extracellular matrix. It is found in the basement membrane. Its function is as follows. Essential extracellular matrix (ECM) protein that influences cell rearrangements. May act by modulating metalloproteinases action during organogenesis. Able to non-competitively inhibit procollagen N-proteinase, an ADAMTS metalloproteinase. The protein is Papilin (Ppn) of Drosophila melanogaster (Fruit fly).